The primary structure comprises 762 residues: MTNVKTSSLGFPRIGLNREWKKSLEAYWKGNTDRETFLKEMDEQFLAALQTQLDQQIDIIPVSDFTMYDHVLDTAVMFNWIPDRFKDINDPLDTYFAMARGTKDAVSSEMTKWFNTNYHYIVPEYEKGAQYRVTRNKPLQDYQRAKAALGTETKPVILGLYTFVALAKGYEQQDIKDIYNQMTPLYIQVLKELEQEGVKWVQIDEPALVTASPEEAAAVKEIYQTITEEVSELNILLQTYFDSVDAYEELISFPVAGIGLDFVHDKGKNFEHLKAHGFPKDKVLAAGILDGRNIWKANLEERLDLTLELIQRAGVDEVWIQPSNSLLHVPVAKHPGEHLADDLLNGLSFAKEKLLELTLLKNGLVSGKAAIQAEIDEAHGHLQDLKQYGAATNSAFAEERGKLTEEDFKRPTAFEERLRIQNDSLGLPLLPTTTIGSFPQTADVRSARQKWRKKEWSDEQYEAFIQEETKKWIDIQEDLGLDVLVHGEFERTDMVEYFGEKLGGFAFTKYAWVQSYGSRCVRPPVIYGDVEFKEPMTVKETVYAQSLTSKKVKGMLTGPVTILNWSFARYDLPRKEIAFQIACALRKEVEALEKAGIQIIQVDEPALREGLPLKERDWDEYLKWAAEAFRLSTSSVEDTTQIHTHMCYSNFEDIVDAIEDLDADVITIEHSRSHGGFLDYLEQHPYLKGLGLGVYDIHSPRVPSSDEMLTIIEDALKVCPADRFWVNPDCGLKTRQPEETIAALKNMVEAAKQARGKLAQTV.

5-methyltetrahydropteroyltri-L-glutamate contacts are provided by residues 18 to 21 and Lys-112; that span reads REWK. L-homocysteine contacts are provided by residues 435-437 and Glu-488; that span reads IGS. L-methionine is bound by residues 435 to 437 and Glu-488; that span reads IGS. Residues 519–520 and Trp-565 contribute to the 5-methyltetrahydropteroyltri-L-glutamate site; that span reads RC. An L-homocysteine-binding site is contributed by Asp-603. Asp-603 contacts L-methionine. Position 609 (Glu-609) interacts with 5-methyltetrahydropteroyltri-L-glutamate. Zn(2+)-binding residues include His-645, Cys-647, and Glu-669. His-698 serves as the catalytic Proton donor. Cys-730 lines the Zn(2+) pocket.

Belongs to the vitamin-B12 independent methionine synthase family. The cofactor is Zn(2+).

The catalysed reaction is 5-methyltetrahydropteroyltri-L-glutamate + L-homocysteine = tetrahydropteroyltri-L-glutamate + L-methionine. It functions in the pathway amino-acid biosynthesis; L-methionine biosynthesis via de novo pathway; L-methionine from L-homocysteine (MetE route): step 1/1. Its function is as follows. Catalyzes the transfer of a methyl group from 5-methyltetrahydrofolate to homocysteine resulting in methionine formation. This is 5-methyltetrahydropteroyltriglutamate--homocysteine methyltransferase from Bacillus licheniformis (strain ATCC 14580 / DSM 13 / JCM 2505 / CCUG 7422 / NBRC 12200 / NCIMB 9375 / NCTC 10341 / NRRL NRS-1264 / Gibson 46).